The primary structure comprises 510 residues: GTPase Der (510 aa).

EngA-type G domains follow at residues Leu3–Ala167 and Ile230–Thr405. GTP is bound by residues Gly9 to Ser16, Asp56 to Phe60, Asn119 to Glu122, Gly236 to Ser243, Asp283 to Leu287, and Ser348 to Asp351. The KH-like domain maps to Ala406–Lys490.

It belongs to the TRAFAC class TrmE-Era-EngA-EngB-Septin-like GTPase superfamily. EngA (Der) GTPase family. As to quaternary structure, associates with the 50S ribosomal subunit.

GTPase that plays an essential role in the late steps of ribosome biogenesis. In Hyphomonas neptunium (strain ATCC 15444), this protein is GTPase Der.